Reading from the N-terminus, the 415-residue chain is Glutamyl-tRNA reductase (415 aa).

Substrate-binding positions include 49-52, S104, 109-111, and Q115; these read TCNR and EPQ. C50 functions as the Nucleophile in the catalytic mechanism. An NADP(+)-binding site is contributed by 184–189; the sequence is GAGEMI.

The protein belongs to the glutamyl-tRNA reductase family. As to quaternary structure, homodimer.

It catalyses the reaction (S)-4-amino-5-oxopentanoate + tRNA(Glu) + NADP(+) = L-glutamyl-tRNA(Glu) + NADPH + H(+). It functions in the pathway porphyrin-containing compound metabolism; protoporphyrin-IX biosynthesis; 5-aminolevulinate from L-glutamyl-tRNA(Glu): step 1/2. In terms of biological role, catalyzes the NADPH-dependent reduction of glutamyl-tRNA(Glu) to glutamate 1-semialdehyde (GSA). The sequence is that of Glutamyl-tRNA reductase from Neisseria meningitidis serogroup C / serotype 2a (strain ATCC 700532 / DSM 15464 / FAM18).